A 365-amino-acid chain; its full sequence is 3-amino-4-hydroxybenzoate 4-O-methyltransferase (365 aa).

The segment covering 1–18 (MTVPENAQHTAPDQTQHT) has biased composition (polar residues). Residues 1-32 (MTVPENAQHTAPDQTQHTAPDRTRQAQQAAPD) are disordered. S-adenosyl-L-methionine-binding positions include D227, 253–255 (GDF), and R270. H273 acts as the Proton acceptor in catalysis.

It belongs to the class I-like SAM-binding methyltransferase superfamily. Cation-independent O-methyltransferase family.

The catalysed reaction is 3-amino-2,4-dihydroxybenzoate + S-adenosyl-L-methionine = 3-amino-2-hydroxy-4-methoxybenzoate + S-adenosyl-L-homocysteine + H(+). Its pathway is antibiotic biosynthesis. Functionally, part of a gene cluster involved in the biosynthesis of cremeomycin, a light-sensitive o-diazoquinone with antibacterial and antiproliferative effects. Catalyzes the methylation of the C4 hydroxyl group of 3-amino-2,4-dihydroxybenzoate (3,2,4-ADHBA) to form 3-amino-2-hydroxy-4-methoxybenzoate (3,2,4-AHMBA). In vitro, can also catalyze the methylation of 3-amino-4-hydroxybenzoate (3,4-AHBA). The chain is 3-amino-4-hydroxybenzoate 4-O-methyltransferase from Streptomyces cremeus.